We begin with the raw amino-acid sequence, 186 residues long: Ribosome-recycling factor (186 aa).

It belongs to the RRF family.

The protein localises to the cytoplasm. Functionally, responsible for the release of ribosomes from messenger RNA at the termination of protein biosynthesis. May increase the efficiency of translation by recycling ribosomes from one round of translation to another. The protein is Ribosome-recycling factor of Paraburkholderia phymatum (strain DSM 17167 / CIP 108236 / LMG 21445 / STM815) (Burkholderia phymatum).